The chain runs to 165 residues: Protein SEED AND ROOT HAIR PROTECTIVE PROTEIN (165 aa).

The N-terminal stretch at methionine 1–alanine 24 is a signal peptide.

Belongs to the plant proline-rich protein superfamily. As to expression, root hair and seed specific expression. Also observed in other tissues including siliques, roots and flowers.

It is found in the secreted. It localises to the cell wall. In terms of biological role, contributes to cell wall structure in root hairs and seeds, especially in phosphate (Pi) deprivation conditions or in the presence of ethylene. Particularly important in maternal tissues (pericarps and seed coats) during seed development, especially under stress conditions. Confers thermotolerance in seed germination rate. This Arabidopsis thaliana (Mouse-ear cress) protein is Protein SEED AND ROOT HAIR PROTECTIVE PROTEIN.